Here is a 787-residue protein sequence, read N- to C-terminus: Signal transducer and activator of transcription 5B (787 aa).

A Phosphotyrosine modification is found at Tyr90. Phosphoserine is present on Ser128. The 98-residue stretch at 589 to 686 folds into the SH2 domain; sequence WNDGAILGFV…EVYSKYYTPV (98 aa). Phosphotyrosine is present on Tyr682. Tyr699 bears the Phosphotyrosine; by HCK, JAK and PTK6 mark.

It belongs to the transcription factor STAT family. Upon activation, forms a homodimer or a heterodimer with a related family member. Binds NR3C1. Interacts with NCOA1. Interacts with NMI. Interacts with SOCS7. Interacts (via SH2 domain) with INSR. Interacts with CPEB3; this inhibits STAT5B-mediated transcriptional activation. Tyrosine phosphorylated in response to signaling via activated KIT, resulting in translocation to the nucleus. Tyrosine phosphorylated in response to signaling via activated FLT3; wild-type FLT3 results in much weaker phosphorylation than constitutively activated mutant FLT3. Alternatively, can be phosphorylated by JAK2. Phosphorylation at Tyr-699 by PTK6 or HCK leads to an increase of its transcriptional activity.

The protein resides in the cytoplasm. It is found in the nucleus. Carries out a dual function: signal transduction and activation of transcription. Mediates cellular responses to the cytokine KITLG/SCF and other growth factors. Binds to the GAS element and activates PRL-induced transcription. Positively regulates hematopoietic/erythroid differentiation. In Sus scrofa (Pig), this protein is Signal transducer and activator of transcription 5B (STAT5B).